Consider the following 350-residue polypeptide: Galactokinase (350 aa).

Position 14 to 17 (14 to 17 (EHTD)) interacts with substrate. Residues Ser-46 and 96 to 102 (GAGLSSS) each bind ATP. Mg(2+) is bound by residues Ser-102 and Glu-134. Residue Asp-146 is the Proton acceptor of the active site. Substrate is bound at residue Tyr-196.

This sequence belongs to the GHMP kinase family. GalK subfamily.

Its subcellular location is the cytoplasm. It catalyses the reaction alpha-D-galactose + ATP = alpha-D-galactose 1-phosphate + ADP + H(+). The protein operates within carbohydrate metabolism; galactose metabolism. Its function is as follows. Catalyzes the transfer of the gamma-phosphate of ATP to D-galactose to form alpha-D-galactose-1-phosphate (Gal-1-P). The polypeptide is Galactokinase (Thermotoga maritima (strain ATCC 43589 / DSM 3109 / JCM 10099 / NBRC 100826 / MSB8)).